Reading from the N-terminus, the 376-residue chain is Methylthioribose-1-phosphate isomerase (376 aa).

Residue Asp-256 is the Proton donor of the active site.

It belongs to the eIF-2B alpha/beta/delta subunits family. MtnA subfamily.

The protein resides in the cytoplasm. It localises to the nucleus. The enzyme catalyses 5-(methylsulfanyl)-alpha-D-ribose 1-phosphate = 5-(methylsulfanyl)-D-ribulose 1-phosphate. It participates in amino-acid biosynthesis; L-methionine biosynthesis via salvage pathway; L-methionine from S-methyl-5-thio-alpha-D-ribose 1-phosphate: step 1/6. Its function is as follows. Catalyzes the interconversion of methylthioribose-1-phosphate (MTR-1-P) into methylthioribulose-1-phosphate (MTRu-1-P). In Vitis vinifera (Grape), this protein is Methylthioribose-1-phosphate isomerase.